The sequence spans 296 residues: Light-independent protochlorophyllide reductase iron-sulfur ATP-binding protein (296 aa).

ATP is bound by residues 10–15 (GIGKST) and lysine 39. Serine 14 contributes to the Mg(2+) binding site. [4Fe-4S] cluster contacts are provided by cysteine 95 and cysteine 129. 180 to 181 (NR) lines the ATP pocket.

The protein belongs to the NifH/BchL/ChlL family. In terms of assembly, homodimer. Protochlorophyllide reductase is composed of three subunits; ChlL, ChlN and ChlB. The cofactor is [4Fe-4S] cluster.

It is found in the plastid. The protein resides in the chloroplast. It carries out the reaction chlorophyllide a + oxidized 2[4Fe-4S]-[ferredoxin] + 2 ADP + 2 phosphate = protochlorophyllide a + reduced 2[4Fe-4S]-[ferredoxin] + 2 ATP + 2 H2O. The protein operates within porphyrin-containing compound metabolism; chlorophyll biosynthesis (light-independent). Functionally, component of the dark-operative protochlorophyllide reductase (DPOR) that uses Mg-ATP and reduced ferredoxin to reduce ring D of protochlorophyllide (Pchlide) to form chlorophyllide a (Chlide). This reaction is light-independent. The L component serves as a unique electron donor to the NB-component of the complex, and binds Mg-ATP. This chain is Light-independent protochlorophyllide reductase iron-sulfur ATP-binding protein, found in Mesostigma viride (Green alga).